The following is a 416-amino-acid chain: WD repeat-containing protein JIP5 (416 aa).

WD repeat units lie at residues Pro9–Lys48, Arg62–Lys101, and Gly112–Ser151. Residues Glu149–Lys183 are disordered. Residues Ser166 to Ser179 are compositionally biased toward low complexity. 3 WD repeats span residues Ile214–Glu255, Asp264–Leu308, and Ser309–Asn348. Composition is skewed to acidic residues over residues Ser343–Asn359 and Ser374–Asp383. The interval Ser343–Asp416 is disordered. Basic residues predominate over residues Lys389–Gly400.

This sequence belongs to the WD repeat WDR55 family.

It is found in the nucleus. The protein resides in the nucleolus. This Coccidioides immitis (strain RS) (Valley fever fungus) protein is WD repeat-containing protein JIP5 (JIP5).